We begin with the raw amino-acid sequence, 594 residues long: MTSVEKASKACELCRRKKIRCNRELPSCQNCIVYQEECHYSKRLKRSYSATKKKNGNPVLESAIPSLSPSPSIENGSAMLNSDITSLSNRIFKVEEKLDLILSLLKNSSEPLDRTERKDFPSLAMQIRDANSLVNTKLKEYSRRFELPSQKTSFDDLFSSTFPNFDAAFKDIPDKEWAFENVQWYFRYINCWWPVFYEKDFMDEYECLYRDRNQVKGAWLVSFYSVLALAASRSKAGKDQKLAESFFSTSWYLIQKPGFFLTPQLEKIQALLIMIQFAAHVSLHTLCKALCGQACLMIRDLNLHRESANADFSNKDAELRRRVFWICYIFEITTSLVFGTPSVLSDMDIDCEHPNYEYGRYFSEMPTGDLIFSSEVSLTILKNEVRTKVYSRTNTSNARNREKAIWQIHEKLLCWERALPIELRQYFIALTENAQIYEELDFEKQRLFSACIEVYLSYCNTLIFLHRLNESVEGANICLDTARRAINVLKFFFIIPIAKNVCYLWVFLYCPFTPFLVLFSNIVNGKEPSTDIAFEDLNRMYSVNRFFVKLRDIGGDLAEKLASVTENFIHAAENYFAVQPAFMADAFDFASFLT.

Residues 11 to 38 (CELCRRKKIRCNRELPSCQNCIVYQEEC) constitute a DNA-binding region (zn(2)-C6 fungal-type). A helical membrane pass occupies residues 503-523 (YLWVFLYCPFTPFLVLFSNIV).

Its subcellular location is the nucleus. The protein localises to the membrane. This is an uncharacterized protein from Schizosaccharomyces pombe (strain 972 / ATCC 24843) (Fission yeast).